The chain runs to 438 residues: Trigger factor (438 aa).

A PPIase FKBP-type domain is found at Glu-163 to Pro-249.

The protein belongs to the FKBP-type PPIase family. Tig subfamily.

It localises to the cytoplasm. The catalysed reaction is [protein]-peptidylproline (omega=180) = [protein]-peptidylproline (omega=0). Functionally, involved in protein export. Acts as a chaperone by maintaining the newly synthesized protein in an open conformation. Functions as a peptidyl-prolyl cis-trans isomerase. In Desulfatibacillum aliphaticivorans, this protein is Trigger factor.